The sequence spans 255 residues: MRFDILTLFPAMFQGPLTESILKRAQQAGKITIHLHDIRDWATDRHRTVDDAPYGGGAGMVMKAEPLAAAIRAVQAADEPGGPVVLLTPDGELFNQSIARELATLPRLILVCGHYEGIDERVRERLVDREISIGDYVLTGGELAAMVVVDAVARLVPGVIDSESIVEESHSDFLLEYPHYTRPAVWEGLAVPSILLSGHHGEIARWRRSERLRRTLARRPDLLARAAAAGVLTKADLALLAEWGWDGMSEGGWMS.

S-adenosyl-L-methionine-binding positions include G113 and I133–L138.

This sequence belongs to the RNA methyltransferase TrmD family. Homodimer.

It localises to the cytoplasm. It catalyses the reaction guanosine(37) in tRNA + S-adenosyl-L-methionine = N(1)-methylguanosine(37) in tRNA + S-adenosyl-L-homocysteine + H(+). Its function is as follows. Specifically methylates guanosine-37 in various tRNAs. The sequence is that of tRNA (guanine-N(1)-)-methyltransferase from Chloroflexus aggregans (strain MD-66 / DSM 9485).